We begin with the raw amino-acid sequence, 611 residues long: MKRLPNNPGVYRMFNSDGDVLYVGKARNLKKRVSNYARGIGHSNRITRMIRETVTMEFVVTRTETEALLLEANLIKRSRPRFNVLMRDDKSFPYILLTGGHRAPGIFKHRGARSRKGDYFGPFASAGAVGRTINALQRAFLLRTCTDSVFETRTRPCLLYQIKRCSAPCTYEISDEDYAGLVAEAKAFLSGKSQSVKDHLAAAMQAASADLDFEHAAVYRDRLAALSHVQSHQGINPQTVEEADVFAIHQEGGMTCIQVFFFRTGQNWGNRAYFPKADSSLGPAEVLGAFLSQFYDDKPCPKLVLLSETVEEQSLITEALSTRAGHKVQVSVPQRGEKKELVQHALTNAREALGRRLAETSSQARLLQGLAETFGLPRAPRRIEVYDNSHIMGTNAVGGMIVAGPEGFVKNQYRKFNIRSTDITPGDDFGMMREVIERRFSRLVKEHGTPAGEVENPDAFPAWPDVILIDGGQGQVGAVRQILGEMGISDLVTAIGIAKGVDREAGRERFFMEGKQPFTLPPRDPVLYFIQRLRDEAHRFAIGTHRARRKKEMVRNPLDEIAGIGPTRKRALLHHFGTAKAVSRAAVEDLMQIDGISEAMARAIHDHFRDK.

A GIY-YIG domain is found at 6 to 84; the sequence is NNPGVYRMFN…IKRSRPRFNV (79 aa). The UVR domain occupies 194–229; sequence QSVKDHLAAAMQAASADLDFEHAAVYRDRLAALSHV.

It belongs to the UvrC family. In terms of assembly, interacts with UvrB in an incision complex.

It localises to the cytoplasm. In terms of biological role, the UvrABC repair system catalyzes the recognition and processing of DNA lesions. UvrC both incises the 5' and 3' sides of the lesion. The N-terminal half is responsible for the 3' incision and the C-terminal half is responsible for the 5' incision. The protein is UvrABC system protein C of Brucella suis biovar 1 (strain 1330).